Reading from the N-terminus, the 342-residue chain is GTPase Obg (342 aa).

Positions 1–159 (MKFLDLCKVY…RTIWLRLKLI (159 aa)) constitute an Obg domain. Residues 160–327 (ADAGLLGLPN…VLRALWAEID (168 aa)) form the OBG-type G domain. Residues 166-173 (GLPNAGKS), 191-195 (FTTLV), 212-215 (DIPG), 279-282 (NKID), and 308-310 (SGV) each bind GTP. Mg(2+) contacts are provided by serine 173 and threonine 193.

This sequence belongs to the TRAFAC class OBG-HflX-like GTPase superfamily. OBG GTPase family. As to quaternary structure, monomer. Requires Mg(2+) as cofactor.

The protein localises to the cytoplasm. In terms of biological role, an essential GTPase which binds GTP, GDP and possibly (p)ppGpp with moderate affinity, with high nucleotide exchange rates and a fairly low GTP hydrolysis rate. Plays a role in control of the cell cycle, stress response, ribosome biogenesis and in those bacteria that undergo differentiation, in morphogenesis control. This chain is GTPase Obg, found in Cereibacter sphaeroides (strain KD131 / KCTC 12085) (Rhodobacter sphaeroides).